We begin with the raw amino-acid sequence, 486 residues long: Palmitoyltransferase pfa4 (486 aa).

Over 1–15 (MTNLQTGPTTRGLQR) the chain is Cytoplasmic. A helical transmembrane segment spans residues 16–36 (FAIPAVCGLIIFLGYYSQYLF). The Lumenal portion of the chain corresponds to 37–51 (NTSADLAPGPLTCRE). The chain crosses the membrane as a helical span at residues 52–72 (SLIFNILLVCLWLTYYQACTV). Residues 73–146 (DPGQYKFPPK…NCVSLQTFPH (74 aa)) lie on the Cytoplasmic side of the membrane. The segment covering 81 to 91 (PKEKEDGDNNN) has biased composition (basic and acidic residues). Residues 81–101 (PKEKEDGDNNNKRGGRGPQKA) are disordered. The 51-residue stretch at 102 to 152 (KWCKKCDAPKPPRAHHCRHCARCIPRMDHHCPWTGNCVSLQTFPHFLRFLV) folds into the DHHC domain. Residue C132 is the S-palmitoyl cysteine intermediate of the active site. The helical transmembrane segment at 147 to 166 (FLRFLVYTNAALVYFARLLW) threads the bilayer. The Lumenal portion of the chain corresponds to 167-178 (TRLYYGLWDQRH). The helical transmembrane segment at 179–201 (VPAYLGPSVGALLGCTMLSIAWF) threads the bilayer. The Cytoplasmic segment spans residues 202–486 (ATQFALMVLL…RKVKSNGVHE (285 aa)). Residues 314-420 (NDRVGMWPPP…QDGRAWMNSE (107 aa)) are disordered. Basic and acidic residues-rich tracts occupy residues 324-333 (DPEKLRRERA) and 346-376 (LNTE…DLRR). The span at 386 to 399 (EEDEIMAELEEDEG) shows a compositional bias: acidic residues.

Belongs to the DHHC palmitoyltransferase family. PFA4 subfamily.

The protein localises to the endoplasmic reticulum membrane. It catalyses the reaction L-cysteinyl-[protein] + hexadecanoyl-CoA = S-hexadecanoyl-L-cysteinyl-[protein] + CoA. Mediates the reversible addition of palmitate to target proteins, thereby regulating their membrane association and biological function. In Neurospora crassa (strain ATCC 24698 / 74-OR23-1A / CBS 708.71 / DSM 1257 / FGSC 987), this protein is Palmitoyltransferase pfa4.